A 50-amino-acid polypeptide reads, in one-letter code: Large ribosomal subunit protein bL33A (50 aa).

It belongs to the bacterial ribosomal protein bL33 family.

This chain is Large ribosomal subunit protein bL33A (rpmG1), found in Mycoplasmopsis pulmonis (strain UAB CTIP) (Mycoplasma pulmonis).